The following is a 446-amino-acid chain: Putrescine N-hydroxylase (446 aa).

FAD contacts are provided by Phe17, Asp37, Ser38, Lys39, Trp44, and His45. The NADP(+) site is built by Thr54, Gln56, and Arg98. Gln56 is a binding site for FAD. Val121 serves as a coordination point for FAD. 4 residues coordinate NADP(+): Ser199, Lys223, Tyr267, and Leu301. The FAD site is built by Asn378, Pro389, and Leu391.

This sequence belongs to the lysine N(6)-hydroxylase/L-ornithine N(5)-oxygenase family. Homotetramer. FAD is required as a cofactor.

It carries out the reaction putrescine + NADPH + O2 = N-hydroxyputrescine + NADP(+) + H2O. It functions in the pathway siderophore biosynthesis. Its function is as follows. N-hydroxylating monooxygenase involved in the biosynthesis of fimsbactin A, the major siderophore produced by A.baumannii. Catalyzes the N-hydroxylation of the aliphatic diamine putrescine into N-hydroxyputrescine (NHP). Putrescine is the preferred substrate, but the enzyme can also catalyze the N-hydroxylation of cadaverine, with 4-fold lower catalytic efficiency. Cannot use lysine or ornithine as substrates. Uses both NADPH and NADH as the reducing cofactor with a preference for NADPH. This chain is Putrescine N-hydroxylase, found in Acinetobacter baumannii (strain ATCC 17978 / DSM 105126 / CIP 53.77 / LMG 1025 / NCDC KC755 / 5377).